The following is a 502-amino-acid chain: Neuronal acetylcholine receptor subunit alpha-7 (502 aa).

The signal sequence occupies residues 1 to 22 (MCGGRGGIWLALAAALLHVSLQ). At 23 to 233 (GEFQRRLYKE…VTMRRRTLYY (211 aa)) the chain is on the extracellular side. Ca(2+)-binding residues include Arg42 and Val44. Asn46, Asn90, and Asn133 each carry an N-linked (GlcNAc...) asparagine glycan. Cys150 and Cys164 are disulfide-bonded. Residues Ser172 and Tyr210 each contribute to the Ca(2+) site. An intrachain disulfide couples Cys212 to Cys213. 3 helical membrane passes run 234-254 (GLNLLIPCVLISALALLVFLL), 262-282 (ISLGITVLLSLTVFMLLVAEI), and 295-315 (QYFASTMIIVGLSVVVTVIVL). The segment at 260–267 (EKISLGIT) is essential for TMEM35A/NACHO-mediated proper subunit assembly and trafficking to cell membrane. Topologically, residues 316–469 (RYHHHDPDGG…WKFAACVVDR (154 aa)) are cytoplasmic. Residues 470-490 (LCLMAFSVFTIICTIGILMSA) traverse the membrane as a helical segment.

The protein belongs to the ligand-gated ion channel (TC 1.A.9) family. Acetylcholine receptor (TC 1.A.9.1) subfamily. Alpha-7/CHRNA7 sub-subfamily. In terms of assembly, homopentamer. Can also form heteropentamers with CHRNB2, mainly found in basal forebrain cholinergic neurons. Interacts with RIC3; which is required for proper folding and assembly. Interacts with LYPD6. Interacts with CANX. Post-translationally, glycosylations at Asn-46, Asn-90 and Asn-133 are essential for TMEM35A/NACHO-mediated proper subunit assembly and trafficking to the cell membrane. Expressed in neurons. Expressed in umbrella cells of urothelium (at protein level).

The protein resides in the postsynaptic cell membrane. It localises to the cell membrane. The enzyme catalyses Ca(2+)(in) = Ca(2+)(out). It carries out the reaction K(+)(in) = K(+)(out). It catalyses the reaction Na(+)(in) = Na(+)(out). The catalysed reaction is choline(out) = choline(in). The enzyme catalyses NH4(+)(in) = NH4(+)(out). It carries out the reaction L-arginine(in) = L-arginine(out). It catalyses the reaction guanidine(out) = guanidine(in). Activated by a myriad of ligands such as acetylcholine, cytisine, nicotine, choline and epibatidine. Oligomeric amyloid-beta protein 42 activates specifially CHRNA7:CHRNB2 nAchRs. Activity is modulated by positive allosteric modulators (PAMs), such as flavonoids, with a wide range of chemical diversity, pharmacological sensitivity and efficacy. AChR activity is inhibited by the antagonists alpha-conotoxons RgIA, ImI and ImII, small disulfide-constrained peptides from cone snails. Alpha-conotoxin PnIC selectively inhibits CHRNA7:CHRNB2 over CHRNA7 homopentamer. In terms of biological role, component of neuronal acetylcholine receptors (nAChRs) that function as pentameric, ligand-gated cation channels with high calcium permeability among other activities. nAChRs are excitatory neurotrasnmitter receptors formed by a collection of nAChR subunits known to mediate synaptic transmission in the nervous system and the neuromuscular junction. Each nAchR subunit confers differential attributes to channel properties, including activation, deactivation and desensitization kinetics, pH sensitivity, cation permeability, and binding to allosteric modulators. CHRNA7 forms homopentameric neuronal acetylcholine receptors abundantly expressed in the central nervous system, characterized by fast desensitization and high calcium permeability. Also forms heteropentamers with CHRNB2, mainly expressed in basal forebrain cholinergic neurons. Involved in the modulation of calcium-dependent signaling pathways and influences the release of neurotransmitters, including dopamine, glutamate and GABA. Also expressed in non-neuronal cells such as immune cells like lymphocytes, monocytes and macrophages. In T cells, activation induces metabotropic signaling that results in an increase of intracellular Ca2+ concentrations, independent of ionotropic receptor functions. In macrophages, required for acetylcholine-mediated inhibition of TNF and other inflammatory cytokine release. Once activated by acetylcholine, nicotine or other agonists, selectively inhibits production of pro-inflammatory cytokines while leaving anti-inflammatory cytokines undisturbed. Stimulates the cholinergic anti-inflammatory pathway, controlling inflammation by inhibiting NFKB nuclear translocation and activating the JAK2-STAT3 pathway, independently of ion channel activity. Also expressed in the urothelium where it modulates reflex bladder activity by increasing intracellular calcium through internal stores and decreasing basal ATP release. The sequence is that of Neuronal acetylcholine receptor subunit alpha-7 (Chrna7) from Rattus norvegicus (Rat).